The chain runs to 751 residues: Ribosome biogenesis protein ERB1 (751 aa).

Disordered stretches follow at residues 1 to 140 and 289 to 336; these read MALT…GNVP and SEPS…DPED. 2 stretches are compositionally biased toward acidic residues: residues 34-92 and 119-129; these read LTDE…SDSD and IEPDYDSDSST. Residues 294–305 are compositionally biased toward pro residues; that stretch reads SQPPPLPAPKRP. Positions 323-336 are enriched in basic and acidic residues; the sequence is EEEKQEWLKQDPED. 6 WD repeats span residues 410-449, 536-580, 582-621, 622-661, 665-704, and 720-751; these read HPKG…EIRR, PSSG…APFK, IKGA…KTLQ, PGIR…KPYK, YHSR…DLMT, and TDGL…VWCS.

The protein belongs to the WD repeat BOP1/ERB1 family. Component of the NOP7 complex, composed of ERB1, NOP7 and YTM1. The complex is held together by ERB1, which interacts with NOP7 via its N-terminal domain and with YTM1 via a high-affinity interaction between the seven-bladed beta-propeller domains of the 2 proteins. The NOP7 complex associates with the 66S pre-ribosome.

Its subcellular location is the nucleus. The protein localises to the nucleolus. It localises to the nucleoplasm. In terms of biological role, component of the NOP7 complex, which is required for maturation of the 25S and 5.8S ribosomal RNAs and formation of the 60S ribosome. This is Ribosome biogenesis protein ERB1 from Coprinopsis cinerea (strain Okayama-7 / 130 / ATCC MYA-4618 / FGSC 9003) (Inky cap fungus).